We begin with the raw amino-acid sequence, 263 residues long: Ribosome maturation factor RimP (263 aa).

Residues 192–263 (EREMKRDLGI…RGEIDPIEGE (72 aa)) form a disordered region. A compositionally biased stretch (basic residues) spans 217 to 231 (PARRNAPKPKLKSTA). A compositionally biased stretch (basic and acidic residues) spans 232-257 (KAHEKKPPKNTKEHRLAAERLRRGEI).

Belongs to the RimP family.

Its subcellular location is the cytoplasm. Its function is as follows. Required for maturation of 30S ribosomal subunits. The polypeptide is Ribosome maturation factor RimP (Nitrobacter hamburgensis (strain DSM 10229 / NCIMB 13809 / X14)).